The sequence spans 116 residues: Protein Rev (116 aa).

Phosphoserine; by host CK2 occurs at positions 5 and 8. A homomultimerization region spans residues 18 to 26; that stretch reads LIKFLYQSN. The segment at 23–49 is disordered; sequence YQSNPPPNPEGTRQARRNRRRRWRERQ. Residues 34-50 carry the Nuclear localization signal and RNA-binding (RRE) motif; sequence TRQARRNRRRRWRERQR. Over residues 36 to 47 the composition is skewed to basic residues; that stretch reads QARRNRRRRWRE. A Nuclear export signal and binding to XPO1 motif is present at residues 73–84; it reads LQLPPLERLTLD. A phosphoserine; by host mark is found at Ser-92 and Ser-99.

It belongs to the HIV-1 REV protein family. In terms of assembly, homomultimer; when bound to the RRE. Multimeric assembly is essential for activity and may involve XPO1. Binds to human KPNB1, XPO1, TNPO1, RANBP5 and IPO7. Interacts with the viral Integrase. Interacts with human KHDRBS1. Interacts with human NAP1; this interaction decreases Rev multimerization and stimulates its activity. Interacts with human DEAD-box helicases DDX3 and DDX24; these interactions may serve for viral RNA export to the cytoplasm and packaging, respectively. Interacts with human PSIP1; this interaction may inhibit HIV-1 DNA integration by promoting dissociation of the Integrase-LEDGF/p75 complex. In terms of processing, asymmetrically arginine dimethylated at one site by host PRMT6. Methylation impairs the RNA-binding activity and export of viral RNA from the nucleus to the cytoplasm. Post-translationally, phosphorylated by protein kinase CK2. Presence of, and maybe binding to the N-terminus of the regulatory beta subunit of CK2 is necessary for CK2-mediated Rev's phosphorylation.

It is found in the host nucleus. It localises to the host nucleolus. The protein resides in the host cytoplasm. Escorts unspliced or incompletely spliced viral pre-mRNAs (late transcripts) out of the nucleus of infected cells. These pre-mRNAs carry a recognition sequence called Rev responsive element (RRE) located in the env gene, that is not present in fully spliced viral mRNAs (early transcripts). This function is essential since most viral proteins are translated from unspliced or partially spliced pre-mRNAs which cannot exit the nucleus by the pathway used by fully processed cellular mRNAs. Rev itself is translated from a fully spliced mRNA that readily exits the nucleus. Rev's nuclear localization signal (NLS) binds directly to KPNB1/Importin beta-1 without previous binding to KPNA1/Importin alpha-1. KPNB1 binds to the GDP bound form of RAN (Ran-GDP) and targets Rev to the nucleus. In the nucleus, the conversion from Ran-GDP to Ran-GTP dissociates Rev from KPNB1 and allows Rev's binding to the RRE in viral pre-mRNAs. Rev multimerization on the RRE via cooperative assembly exposes its nuclear export signal (NES) to the surface. Rev can then form a complex with XPO1/CRM1 and Ran-GTP, leading to nuclear export of the complex. Conversion from Ran-GTP to Ran-GDP mediates dissociation of the Rev/RRE/XPO1/RAN complex, so that Rev can return to the nucleus for a subsequent round of export. Beside KPNB1, also seems to interact with TNPO1/Transportin-1, RANBP5/IPO5 and IPO7/RANBP7 for nuclear import. The nucleoporin-like HRB/RIP is an essential cofactor that probably indirectly interacts with Rev to release HIV RNAs from the perinuclear region to the cytoplasm. The chain is Protein Rev from Human immunodeficiency virus type 1 group M subtype B (isolate HXB3) (HIV-1).